Consider the following 540-residue polypeptide: Glucose-6-phosphate isomerase (540 aa).

Catalysis depends on E346, which acts as the Proton donor. Catalysis depends on residues H377 and K505.

It belongs to the GPI family.

The protein resides in the cytoplasm. It catalyses the reaction alpha-D-glucose 6-phosphate = beta-D-fructose 6-phosphate. It participates in carbohydrate biosynthesis; gluconeogenesis. It functions in the pathway carbohydrate degradation; glycolysis; D-glyceraldehyde 3-phosphate and glycerone phosphate from D-glucose: step 2/4. Catalyzes the reversible isomerization of glucose-6-phosphate to fructose-6-phosphate. The protein is Glucose-6-phosphate isomerase of Francisella philomiragia subsp. philomiragia (strain ATCC 25017 / CCUG 19701 / FSC 153 / O#319-036).